The primary structure comprises 365 residues: Alanine racemase (365 aa).

The active-site Proton acceptor; specific for D-alanine is K35. K35 carries the N6-(pyridoxal phosphate)lysine modification. A substrate-binding site is contributed by R130. Y256 serves as the catalytic Proton acceptor; specific for L-alanine. M304 provides a ligand contact to substrate.

This sequence belongs to the alanine racemase family. The cofactor is pyridoxal 5'-phosphate.

It catalyses the reaction L-alanine = D-alanine. The protein operates within amino-acid biosynthesis; D-alanine biosynthesis; D-alanine from L-alanine: step 1/1. In terms of biological role, catalyzes the interconversion of L-alanine and D-alanine. May also act on other amino acids. The polypeptide is Alanine racemase (alr) (Acidovorax ebreus (strain TPSY) (Diaphorobacter sp. (strain TPSY))).